Reading from the N-terminus, the 307-residue chain is Replication termination factor 2 (307 aa).

The segment at 193–296 (AKLEKKTKKP…SSAKRSKEES (104 aa)) is disordered. Positions 227-241 (GKPEEADPDPREKKS) are enriched in basic and acidic residues. Phosphoserine is present on Ser-288.

Belongs to the rtf2 family. Interacts with DDI2; probably also interacts with DDI1. Undergoes proteasomal degradation, via DDI1 and DDI2. Removal from stalled replisomes and degradation are required for genome stability.

It is found in the chromosome. Functionally, replication termination factor which is a component of the elongating replisome. Required for ATR pathway signaling upon DNA damage and has a positive activity during DNA replication. Might function to facilitate fork pausing at replication fork barriers like the rDNA. May be globally required to stimulate ATR signaling after the fork stalls or encounters a lesion. Interacts with nascent DNA. In Mus musculus (Mouse), this protein is Replication termination factor 2.